The sequence spans 144 residues: Cytochrome c'' (144 aa).

Residues 1–20 (MKIKTIIAVFGVLFSAHALA) form the signal peptide. The heme c site is built by cysteine 69, cysteine 72, histidine 73, and histidine 115. Cysteines 116 and 124 form a disulfide.

In terms of assembly, monomer. In terms of processing, binds 1 heme c group covalently per subunit. The heme is low-spin in the oxidized state but switches to a high-spin form upon reduction, due to the dissociation of one of the axial histidines, His-115.

The chain is Cytochrome c'' (cycA) from Methylophilus methylotrophus (Bacterium W3A1).